A 170-amino-acid polypeptide reads, in one-letter code: Neurotensin/neuromedin N (170 aa).

A signal peptide spans 1 to 23; the sequence is MMAGMKIQLVCMILLAFSSWSLC.

The protein belongs to the neurotensin family. In terms of assembly, interacts with NTSR1. Interacts with SORT1. Interacts with SORL1. In terms of processing, neurotensin is cleaved and degraded by Angiotensin-converting enzyme (ACE) and neprilysin (MME).

The protein resides in the secreted. Its subcellular location is the cytoplasmic vesicle. The protein localises to the secretory vesicle. Functionally, neurotensin may play an endocrine or paracrine role in the regulation of fat metabolism. It causes contraction of smooth muscle. This chain is Neurotensin/neuromedin N (NTS), found in Canis lupus familiaris (Dog).